An 83-amino-acid chain; its full sequence is uncharacterized protein (83 aa).

This is an uncharacterized protein from Escherichia coli (strain K12).